The sequence spans 904 residues: Protein translocase subunit SecA (904 aa).

ATP is bound by residues Gln-89, 107-111, and Asp-496; that span reads GEGKT. Positions 870–904 are disordered; sequence GGFQELSSGTPSPTVTVTTSSGGGTERKTSRRRKR. Low complexity predominate over residues 876–889; sequence SSGTPSPTVTVTTS.

Belongs to the SecA family. In terms of assembly, monomer and homodimer. Part of the essential Sec protein translocation apparatus which comprises SecA, SecYEG and auxiliary proteins SecDF. Other proteins may also be involved.

Its subcellular location is the cell inner membrane. The protein resides in the cytoplasm. The catalysed reaction is ATP + H2O + cellular proteinSide 1 = ADP + phosphate + cellular proteinSide 2.. Functionally, part of the Sec protein translocase complex. Interacts with the SecYEG preprotein conducting channel. Has a central role in coupling the hydrolysis of ATP to the transfer of proteins into and across the cell membrane, serving as an ATP-driven molecular motor driving the stepwise translocation of polypeptide chains across the membrane. This chain is Protein translocase subunit SecA, found in Leptospira borgpetersenii serovar Hardjo-bovis (strain JB197).